The primary structure comprises 401 residues: NADH-dependent flavin oxidoreductase iliE (401 aa).

Residues 25-28 (ASMS) and Q107 each bind FMN. 188 to 191 (HAAH) contacts substrate. 346–347 (AR) is a binding site for FMN.

It belongs to the NADH:flavin oxidoreductase/NADH oxidase family.

Functionally, NADH-dependent flavin oxidoreductase; part of the gene cluster that mediates the biosynthesis of ilicicolin H, a 4-hydroxy-2-pyridonealkaloid that has potent and broad antifungal activities by inhibiting the mitochondrial respiration chain. The biosynthesis of ilicicolin H starts with formation of the tetramic acid by the hybrid PKS-NRPS synthetase iliA with the partnering trans-enoyl reductase iliB since iliA lacks a designated enoylreductase (ER) domain. The cytochrome P450 monooxygenase iliC then catalyzes the ring expansion of the tetramate to the acyclic 2-pyridone. The pericyclase iliD further converts the acyclic 2-pyridone into 8-epi-ilicicolin H. 8-epi-ilicicolin H might then spontaneously convert to ilicicolin H since ilicicolin H is produced in the absence of the epimerase iliE, in contrast to what was observed for the Talaromyces variabilis ilicolin H biosynthetic pathway. This Hypocrea jecorina (strain QM6a) (Trichoderma reesei) protein is NADH-dependent flavin oxidoreductase iliE.